The following is a 269-amino-acid chain: Surfeit locus protein 4 (269 aa).

6 consecutive transmembrane segments (helical) span residues 64–84 (FLAS…CILV), 92–112 (YACF…SILW), 157–177 (MQLG…HFDM), 179–199 (FFYI…AIGF), 203–223 (LAAL…NAFW), and 242–262 (TMSV…GVSM). A Di-lysine motif motif is present at residues 266–269 (KKEW).

The protein belongs to the SURF4 family.

Its subcellular location is the endoplasmic reticulum membrane. The protein localises to the endoplasmic reticulum-Golgi intermediate compartment membrane. It is found in the golgi apparatus membrane. In terms of biological role, endoplasmic reticulum cargo receptor that mediates the export of lipoproteins by recruiting cargos into COPII vesicles to facilitate their secretion. Acts as a cargo receptor for lipoproteins bearing both APOB and APOA1, thereby regulating lipoprotein delivery and the maintenance of lipid homeostasis. The sequence is that of Surfeit locus protein 4 from Gallus gallus (Chicken).